The primary structure comprises 365 residues: Membrane cofactor protein (365 aa).

The N-terminal stretch at 1–44 (MTAAPLMPDSTHPCRRRKSYTFFWCSLGVYAEALLFLLSHLSDA) is a signal peptide. Sushi domains are found at residues 45-106 (CELP…GCIK), 107-170 (VQCT…HCEK), 171-236 (IYCL…ECKV), and 237-296 (VKCP…KCLK). Residues 45-329 (CELPRPFEAM…GIFSQELDAW (285 aa)) lie on the Extracellular side of the membrane. Intrachain disulfides connect Cys-109–Cys-151, Cys-137–Cys-168, Cys-173–Cys-221, Cys-202–Cys-234, Cys-239–Cys-281, and Cys-267–Cys-294. Residue Asn-181 is glycosylated (N-linked (GlcNAc...) asparagine). Thr-205 is a glycosylation site (O-linked (GalNAc...) threonine). 2 O-linked (GalNAc...) threonine glycosylation sites follow: Thr-301 and Thr-304. Asn-310 is a glycosylation site (N-linked (GlcNAc...) asparagine). Thr-312 carries O-linked (GalNAc...) threonine glycosylation. The helical transmembrane segment at 330-350 (IIALIVITSIVGVFILCLIVL) threads the bilayer. Residues 351–365 (RCFEHRKKTNVSAAR) lie on the Cytoplasmic side of the membrane.

In terms of assembly, interacts with C3b. Interacts with C4b. Interacts with moesin/MSN. In terms of processing, may be O-glycosylated. Post-translationally, N-glycosylated. As to expression, present only in testis (at protein level).

Its subcellular location is the cytoplasmic vesicle. It localises to the secretory vesicle. It is found in the acrosome inner membrane. The protein resides in the secreted. May be involved in the fusion of the spermatozoa with the oocyte during fertilization. The sequence is that of Membrane cofactor protein (Cd46) from Mus musculus (Mouse).